A 529-amino-acid polypeptide reads, in one-letter code: Ribonuclease Y (529 aa).

Residues 4–24 (GLIYISLEVLVACLITALVMY) form a helical membrane-spanning segment. The KH domain occupies 216-297 (LTTRIALPCS…NRIEEVYHRV (82 aa)). The region spanning 342 to 435 (ALQHSKEVAL…VCAADALSAG (94 aa)) is the HD domain.

Belongs to the RNase Y family.

Its subcellular location is the cell membrane. Functionally, endoribonuclease that initiates mRNA decay. The protein is Ribonuclease Y of Helicobacter pylori (strain ATCC 700392 / 26695) (Campylobacter pylori).